The chain runs to 30 residues: Photosystem I reaction center subunit XII (30 aa).

The chain crosses the membrane as a helical span at residues 7–29 (LIAFFLAFTAGILAIKLGQALYD).

It belongs to the PsaM family.

The protein localises to the plastid. It localises to the chloroplast thylakoid membrane. This Pinus thunbergii (Japanese black pine) protein is Photosystem I reaction center subunit XII.